The sequence spans 554 residues: MLSDIEIARSAKLKKIDLIANELDIPEEYYNLYGKNIAKVSHKYLNELNFKNDGNLVMVTAITPTPAGEGKTTTSISLSMALNKIHKRSIVTLREPSLGPVMGIKGGAAGGGYSQVLPMEDINLHFTGDIHAVTSAHNLISAILDDYIKYNKYDIDSTQVSWPRTMDMNDRALREIIVALGGKKNGYPRQDGFIITAASEIMAILCLIENLEDLKKKLSNIVVAKNKKGEPVTVKDLEITGALSVLLKDAINPNLVQTIENTPAFVHGGPFANIAHGTNSILATKLALKLSDYVVTETGFGSDLGGEKFYDFVSPTFGLKPSATVLVATIRALKYHGGQNLKDLNTPNLESLEKGLPNLQVHVENLKKYNIPVVVSLNKFYSDTDEEINMVKDYCDKLGVEVSVNEGFEKGSEGAIDLAEKVVKVSEQQSELKSIYDFKDPLEVKIEKLAKNIYRASKVEYSSEALSTIKFLKKYGYENLPVIVAKTQYSISDDPKKLGFPKDYTFTIRDFELSAGAGFIVALAGDILRMPGLSKVPNAVNMDIDNEGNISGLS.

Position 65 to 72 (65 to 72 (TPAGEGKT)) interacts with ATP.

This sequence belongs to the formate--tetrahydrofolate ligase family.

It carries out the reaction (6S)-5,6,7,8-tetrahydrofolate + formate + ATP = (6R)-10-formyltetrahydrofolate + ADP + phosphate. The protein operates within one-carbon metabolism; tetrahydrofolate interconversion. This Petrotoga mobilis (strain DSM 10674 / SJ95) protein is Formate--tetrahydrofolate ligase.